Consider the following 388-residue polypeptide: Succinate--CoA ligase [ADP-forming] subunit beta (388 aa).

Residues 9 to 244 (KQIFAQYGLP…PSQEDAREAA (236 aa)) enclose the ATP-grasp domain. ATP-binding positions include Lys-46, 53-55 (GRG), Glu-99, Ala-102, and Glu-107. The Mg(2+) site is built by Asn-199 and Asp-213. Residues Asn-264 and 321–323 (GIV) contribute to the substrate site.

The protein belongs to the succinate/malate CoA ligase beta subunit family. In terms of assembly, heterotetramer of two alpha and two beta subunits. It depends on Mg(2+) as a cofactor.

The catalysed reaction is succinate + ATP + CoA = succinyl-CoA + ADP + phosphate. It carries out the reaction GTP + succinate + CoA = succinyl-CoA + GDP + phosphate. It participates in carbohydrate metabolism; tricarboxylic acid cycle; succinate from succinyl-CoA (ligase route): step 1/1. In terms of biological role, succinyl-CoA synthetase functions in the citric acid cycle (TCA), coupling the hydrolysis of succinyl-CoA to the synthesis of either ATP or GTP and thus represents the only step of substrate-level phosphorylation in the TCA. The beta subunit provides nucleotide specificity of the enzyme and binds the substrate succinate, while the binding sites for coenzyme A and phosphate are found in the alpha subunit. In Mannheimia succiniciproducens (strain KCTC 0769BP / MBEL55E), this protein is Succinate--CoA ligase [ADP-forming] subunit beta.